Consider the following 296-residue polypeptide: Ribosomal protein L11 methyltransferase (296 aa).

Residues Thr151, Gly172, Asp194, and Asn233 each coordinate S-adenosyl-L-methionine.

The protein belongs to the methyltransferase superfamily. PrmA family.

It is found in the cytoplasm. The enzyme catalyses L-lysyl-[protein] + 3 S-adenosyl-L-methionine = N(6),N(6),N(6)-trimethyl-L-lysyl-[protein] + 3 S-adenosyl-L-homocysteine + 3 H(+). In terms of biological role, methylates ribosomal protein L11. The chain is Ribosomal protein L11 methyltransferase from Dechloromonas aromatica (strain RCB).